Consider the following 330-residue polypeptide: Taste receptor type 2 member 117 (330 aa).

The Extracellular portion of the chain corresponds to 1–16; it reads MKHFWKILSVISQSTL. A helical membrane pass occupies residues 17-37; it reads SVILIVELVIGIIGNGFMVLV. The Cytoplasmic segment spans residues 38-53; that stretch reads HCMDWVKKKKMSLVNQ. Residues 54–74 traverse the membrane as a helical segment; the sequence is ILTALSISRIFQLCLLFISLV. At 75–95 the chain is on the extracellular side; it reads INFSYTDLTTSSRMIQVMYNA. An N-linked (GlcNAc...) asparagine glycan is attached at asparagine 76. A helical membrane pass occupies residues 96–116; the sequence is WILANHFSIWIATCLTVLYFL. Over 117-135 the chain is Cytoplasmic; the sequence is KIANFSNSFFLYLKWRVEK. A helical membrane pass occupies residues 136–156; the sequence is VVSVTLLVSLLLLILNILLTN. Topologically, residues 157-190 are extracellular; the sequence is LETDMWTNEYQRNISCSFSSHYYAKCHRQVLRLH. A glycan (N-linked (GlcNAc...) asparagine) is linked at asparagine 169. Residues 191-211 traverse the membrane as a helical segment; it reads IIFLSVPVVLSLSTFLLLIFS. At 212 to 239 the chain is on the cytoplasmic side; it reads LWTHHKRMQQHVQGGRDARTTAHFKALQ. A helical membrane pass occupies residues 240–260; it reads TVIAFFLLYSIFILSVLIQIW. The Extracellular segment spans residues 261-269; sequence KYELLKKNL. A helical membrane pass occupies residues 270-290; sequence FVVFCEVVYIAFPTFHSYILI. Topologically, residues 291-330 are cytoplasmic; that stretch reads VGDMKLRQACLPLCIIAAEIQTTLCRNFRSLKYFRLCCIF.

The protein belongs to the G-protein coupled receptor T2R family.

Its subcellular location is the membrane. In terms of biological role, putative taste receptor which may play a role in the perception of bitterness. This Mus musculus (Mouse) protein is Taste receptor type 2 member 117.